We begin with the raw amino-acid sequence, 215 residues long: Probable transaldolase (215 aa).

The Schiff-base intermediate with substrate role is filled by K84.

Belongs to the transaldolase family. Type 3B subfamily.

It is found in the cytoplasm. It carries out the reaction D-sedoheptulose 7-phosphate + D-glyceraldehyde 3-phosphate = D-erythrose 4-phosphate + beta-D-fructose 6-phosphate. It functions in the pathway carbohydrate degradation; pentose phosphate pathway; D-glyceraldehyde 3-phosphate and beta-D-fructose 6-phosphate from D-ribose 5-phosphate and D-xylulose 5-phosphate (non-oxidative stage): step 2/3. Transaldolase is important for the balance of metabolites in the pentose-phosphate pathway. The polypeptide is Probable transaldolase (Exiguobacterium sibiricum (strain DSM 17290 / CCUG 55495 / CIP 109462 / JCM 13490 / 255-15)).